A 533-amino-acid chain; its full sequence is Thromboxane-A synthase (533 aa).

The Cytoplasmic segment spans residues 1 to 10 (MEALGFLKLE). Residues 11–31 (VNGPMVTVALSVALLALLKWY) form a helical membrane-spanning segment. The Lumenal segment spans residues 32–75 (STSAFSRLEKLGLRHPKPSPFIGNLMFFRQGFWESQMELRKLYG). The chain crosses the membrane as a helical span at residues 76 to 96 (PLCGYYLGRRMFIVISEPDMI). The Cytoplasmic portion of the chain corresponds to 97–223 (KQVLVENFSN…KRFFEFCIPR (127 aa)). Residues 224–244 (PILVLLLSFPSIMVPLARILP) traverse the membrane as a helical segment. Residues 245-335 (NKNRDELNGF…LTVDEIVGQA (91 aa)) are Lumenal-facing. A helical membrane pass occupies residues 336 to 356 (FIFLIAGYEIVTNTLSFATYL). The Cytoplasmic portion of the chain corresponds to 357–533 (LATNPDCQEK…NGVYIKIVSR (177 aa)). Cys-479 provides a ligand contact to heme.

Belongs to the cytochrome P450 family. As to quaternary structure, monomer. Heme is required as a cofactor.

It localises to the endoplasmic reticulum membrane. It catalyses the reaction prostaglandin H2 = thromboxane A2. The catalysed reaction is prostaglandin H2 = (12S)-hydroxy-(5Z,8E,10E)-heptadecatrienoate + malonaldehyde. The enzyme catalyses a hydroperoxyeicosatetraenoate = an oxoeicosatetraenoate + H2O. It carries out the reaction (15S)-hydroperoxy-(5Z,8Z,11Z,13E)-eicosatetraenoate = 15-oxo-(5Z,8Z,11Z,13E)-eicosatetraenoate + H2O. It catalyses the reaction (15S)-hydroperoxy-(5Z,8Z,11Z,13E)-eicosatetraenoate + AH2 = (15S)-hydroxy-(5Z,8Z,11Z,13E)-eicosatetraenoate + A + H2O. Functionally, catalyzes the conversion of prostaglandin H2 (PGH2) to thromboxane A2 (TXA2), a potent inducer of blood vessel constriction and platelet aggregation. Also cleaves PGH2 to 12-hydroxy-heptadecatrienoicacid (12-HHT) and malondialdehyde, which is known to act as a mediator of DNA damage. 12-HHT and malondialdehyde are formed stoichiometrically in the same amounts as TXA2. Additionally, displays dehydratase activity, toward (15S)-hydroperoxy-(5Z,8Z,11Z,13E)-eicosatetraenoate (15(S)-HPETE) producing 15-KETE and 15-HETE. The chain is Thromboxane-A synthase (TBXAS1) from Macaca fascicularis (Crab-eating macaque).